The sequence spans 352 residues: Photosystem II D2 protein (352 aa).

Thr-2 carries the N-acetylthreonine modification. At Thr-2 the chain carries Phosphothreonine. A helical transmembrane segment spans residues 40-60 (CAYFALGGWLTGTTFVTSWYT). His-117 contributes to the chlorophyll a binding site. A helical membrane pass occupies residues 124–140 (GFMLRQFEIARAVKIRP). Residues Gln-129 and Asn-142 each contribute to the pheophytin a site. Residues 152-165 (VFVSVFLIYPLGQA) traverse the membrane as a helical segment. His-197 provides a ligand contact to chlorophyll a. The chain crosses the membrane as a helical span at residues 207 to 227 (AALLCAIHGATVENTLFEDGD). 2 residues coordinate a plastoquinone: His-214 and Phe-261. Position 214 (His-214) interacts with Fe cation. Residue His-268 participates in Fe cation binding. The helical transmembrane segment at 278-294 (GLWMSALGVVGLALNLR) threads the bilayer.

This sequence belongs to the reaction center PufL/M/PsbA/D family. PSII is composed of 1 copy each of membrane proteins PsbA, PsbB, PsbC, PsbD, PsbE, PsbF, PsbH, PsbI, PsbJ, PsbK, PsbL, PsbM, PsbT, PsbX, PsbY, PsbZ, Psb30/Ycf12, at least 3 peripheral proteins of the oxygen-evolving complex and a large number of cofactors. It forms dimeric complexes. The D1/D2 heterodimer binds P680, chlorophylls that are the primary electron donor of PSII, and subsequent electron acceptors. It shares a non-heme iron and each subunit binds pheophytin, quinone, additional chlorophylls, carotenoids and lipids. There is also a Cl(-1) ion associated with D1 and D2, which is required for oxygen evolution. The PSII complex binds additional chlorophylls, carotenoids and specific lipids. is required as a cofactor.

The protein resides in the plastid. Its subcellular location is the chloroplast thylakoid membrane. The catalysed reaction is 2 a plastoquinone + 4 hnu + 2 H2O = 2 a plastoquinol + O2. In terms of biological role, photosystem II (PSII) is a light-driven water:plastoquinone oxidoreductase that uses light energy to abstract electrons from H(2)O, generating O(2) and a proton gradient subsequently used for ATP formation. It consists of a core antenna complex that captures photons, and an electron transfer chain that converts photonic excitation into a charge separation. The D1/D2 (PsbA/PsbD) reaction center heterodimer binds P680, the primary electron donor of PSII as well as several subsequent electron acceptors. D2 is needed for assembly of a stable PSII complex. The polypeptide is Photosystem II D2 protein (Tupiella akineta (Green alga)).